We begin with the raw amino-acid sequence, 175 residues long: DELTA-stichotoxin-Hcr4a (175 aa).

Residues 1–10 (ALAGAIIAGA) form a plays an important role in the hemolytic activity region. Residues 9–28 (GASLTFQILDKVLAELGQVS) are N-terminal region. The phosphocholine site is built by Ser52, Val85, Ser103, Pro105, Tyr131, Tyr135, and Tyr136. The tract at residues 103–118 (SVPFDYNLYSNWWDVK) is trp-rich region, which is important for the binding to lipid membrane.

This sequence belongs to the actinoporin family. Sea anemone subfamily. As to quaternary structure, octamer or nonamer in membranes. Monomer in the soluble state.

It localises to the secreted. The protein localises to the nematocyst. It is found in the target cell membrane. Its function is as follows. Pore-forming protein that forms cations-selective hydrophilic pores of around 1 nm and causes cardiac stimulation and cytolysis. Pore formation is a multi-step process that involves specific recognition of membrane sphingomyelin (but neither cholesterol nor phosphatidylcholine) using aromatic rich region and adjacent phosphocholine (POC) binding site, firm binding to the membrane (mainly driven by hydrophobic interactions) accompanied by the transfer of the N-terminal region to the lipid-water interface and finally pore formation after oligomerization of monomers. The polypeptide is DELTA-stichotoxin-Hcr4a (Radianthus crispa (Leathery sea anemone)).